A 485-amino-acid chain; its full sequence is Regulatory protein ViaA (485 aa).

This sequence belongs to the ViaA family. As to quaternary structure, homodimer. Interacts with RavA.

The protein localises to the cytoplasm. Component of the RavA-ViaA chaperone complex, which may act on the membrane to optimize the function of some of the respiratory chains. ViaA stimulates the ATPase activity of RavA. This Photorhabdus laumondii subsp. laumondii (strain DSM 15139 / CIP 105565 / TT01) (Photorhabdus luminescens subsp. laumondii) protein is Regulatory protein ViaA.